The sequence spans 500 residues: Probable cytosol aminopeptidase (500 aa).

2 residues coordinate Mn(2+): lysine 264 and aspartate 269. The active site involves lysine 276. The Mn(2+) site is built by aspartate 287, aspartate 346, and glutamate 348. The active site involves arginine 350.

Belongs to the peptidase M17 family. Requires Mn(2+) as cofactor.

The protein resides in the cytoplasm. The catalysed reaction is Release of an N-terminal amino acid, Xaa-|-Yaa-, in which Xaa is preferably Leu, but may be other amino acids including Pro although not Arg or Lys, and Yaa may be Pro. Amino acid amides and methyl esters are also readily hydrolyzed, but rates on arylamides are exceedingly low.. It catalyses the reaction Release of an N-terminal amino acid, preferentially leucine, but not glutamic or aspartic acids.. Presumably involved in the processing and regular turnover of intracellular proteins. Catalyzes the removal of unsubstituted N-terminal amino acids from various peptides. The protein is Probable cytosol aminopeptidase of Nitrobacter winogradskyi (strain ATCC 25391 / DSM 10237 / CIP 104748 / NCIMB 11846 / Nb-255).